A 708-amino-acid polypeptide reads, in one-letter code: Exocyst complex component 5 (708 aa).

Ala-2 carries the N-acetylalanine modification. The stretch at 40–101 (KRLLEEFVNH…AFQHFQELDE (62 aa)) forms a coiled coil. Phosphothreonine is present on residues Thr-122, Thr-395, and Thr-405. At Ser-412 the chain carries Phosphoserine.

It belongs to the SEC10 family. As to quaternary structure, the exocyst complex is composed of EXOC1, EXOC2, EXOC3, EXOC4, EXOC5, EXOC6, EXOC7 and EXOC8. Interacts with EXOC3L1.

Its subcellular location is the cytoplasm. It localises to the midbody. Component of the exocyst complex involved in the docking of exocytic vesicles with fusion sites on the plasma membrane. This Mus musculus (Mouse) protein is Exocyst complex component 5 (Exoc5).